Reading from the N-terminus, the 660-residue chain is Translation factor GUF1, mitochondrial (660 aa).

The transit peptide at M1 to Y42 directs the protein to the mitochondrion. Residues E62–V242 form the tr-type G domain. Residues A71 to S78, D135 to H139, and N189 to D192 contribute to the GTP site.

It belongs to the TRAFAC class translation factor GTPase superfamily. Classic translation factor GTPase family. LepA subfamily.

The protein resides in the mitochondrion inner membrane. The enzyme catalyses GTP + H2O = GDP + phosphate + H(+). In terms of biological role, promotes mitochondrial protein synthesis. May act as a fidelity factor of the translation reaction, by catalyzing a one-codon backward translocation of tRNAs on improperly translocated ribosomes. Binds to mitochondrial ribosomes in a GTP-dependent manner. This Phaeosphaeria nodorum (strain SN15 / ATCC MYA-4574 / FGSC 10173) (Glume blotch fungus) protein is Translation factor GUF1, mitochondrial.